A 268-amino-acid polypeptide reads, in one-letter code: F-actin-capping protein subunit beta (268 aa).

The protein belongs to the F-actin-capping protein beta subunit family. As to quaternary structure, component of the F-actin capping complex, composed of a heterodimer of an alpha and a beta subunit.

Its subcellular location is the cytoplasm. The protein resides in the cytoskeleton. The protein localises to the actin patch. It localises to the nucleus. Functionally, F-actin-capping proteins bind in a Ca(2+)-independent manner to the fast growing ends of actin filaments (barbed end) thereby blocking the exchange of subunits at these ends. Unlike other capping proteins (such as gelsolin and severin), these proteins do not sever actin filaments. Competes with formin cdc12 for attachment to the actin filaments barbed ends. Slowly replaces cdc12 on the barbed ends in preparation for filament disassembly during contractile ring constriction. In Schizosaccharomyces pombe (strain 972 / ATCC 24843) (Fission yeast), this protein is F-actin-capping protein subunit beta (acp2).